The primary structure comprises 130 residues: MIGNWNYGTGRRKSAVARVFIKSGKGDIIVNGKPIKEYFARETSLMIVRQPLELTAHAETFDIKVNVTGGGETGQAGAVRHGITRALIDYDATLKSALSKAGYVTRDAREVERKKVGFHKARRRKQFSKR.

It belongs to the universal ribosomal protein uS9 family.

The polypeptide is Small ribosomal subunit protein uS9 (Cupriavidus necator (strain ATCC 17699 / DSM 428 / KCTC 22496 / NCIMB 10442 / H16 / Stanier 337) (Ralstonia eutropha)).